The primary structure comprises 171 residues: Putative lipoprotein LppO (171 aa).

The signal sequence occupies residues 1–28 (MTDPRHTVRIAVGATALGVSALGATLPA). Residue Cys-29 is the site of N-palmitoyl cysteine attachment. A lipid anchor (S-diacylglycerol cysteine) is attached at Cys-29.

Its subcellular location is the cell membrane. In Mycobacterium tuberculosis (strain CDC 1551 / Oshkosh), this protein is Putative lipoprotein LppO (lppO).